The chain runs to 359 residues: Phospho-N-acetylmuramoyl-pentapeptide-transferase (359 aa).

Transmembrane regions (helical) follow at residues 24–44 (FRAL…SPIF), 72–92 (FVPS…SILL), 100–120 (TWIM…DDFV), 134–154 (MLGQ…VMHI), 170–190 (LGYF…NAVN), 197–217 (GLAI…SYVA), 234–254 (AGEL…FLWF), 261–281 (MFMG…LAIM), 289–309 (IIAG…VSVF), and 336–356 (KIVV…IATL).

It belongs to the glycosyltransferase 4 family. MraY subfamily. Requires Mg(2+) as cofactor.

The protein resides in the cell inner membrane. It catalyses the reaction UDP-N-acetyl-alpha-D-muramoyl-L-alanyl-gamma-D-glutamyl-meso-2,6-diaminopimeloyl-D-alanyl-D-alanine + di-trans,octa-cis-undecaprenyl phosphate = di-trans,octa-cis-undecaprenyl diphospho-N-acetyl-alpha-D-muramoyl-L-alanyl-D-glutamyl-meso-2,6-diaminopimeloyl-D-alanyl-D-alanine + UMP. It functions in the pathway cell wall biogenesis; peptidoglycan biosynthesis. Its function is as follows. Catalyzes the initial step of the lipid cycle reactions in the biosynthesis of the cell wall peptidoglycan: transfers peptidoglycan precursor phospho-MurNAc-pentapeptide from UDP-MurNAc-pentapeptide onto the lipid carrier undecaprenyl phosphate, yielding undecaprenyl-pyrophosphoryl-MurNAc-pentapeptide, known as lipid I. The protein is Phospho-N-acetylmuramoyl-pentapeptide-transferase of Hydrogenobaculum sp. (strain Y04AAS1).